A 155-amino-acid polypeptide reads, in one-letter code: Myosin light chain alkali (155 aa).

EF-hand domains lie at 7 to 41 (REVE…LNLN) and 80 to 115 (GCYE…LGES).

Myosin is a hexamer of 2 heavy chains and 4 light chains. In terms of tissue distribution, indirect flight muscle isoform is found only in the indirect flight muscles. The larval and adult isoform is present in the larval and adult musculature.

The protein is Myosin light chain alkali (Mlc1) of Drosophila melanogaster (Fruit fly).